The following is a 926-amino-acid chain: LPS-assembly protein LptD (926 aa).

The signal sequence occupies residues 1–22; the sequence is MALKSPAFRKKFPLLVTGSLLA. The segment at 55–91 is disordered; it reads AAAVDLPPRPVHDTTSVSSNGTVTSQGTSSGEQSAGT. A compositionally biased stretch (low complexity) spans 68–91; sequence TTSVSSNGTVTSQGTSSGEQSAGT.

This sequence belongs to the LptD family. Component of the lipopolysaccharide transport and assembly complex. Interacts with LptE and LptA.

It is found in the cell outer membrane. Its function is as follows. Together with LptE, is involved in the assembly of lipopolysaccharide (LPS) at the surface of the outer membrane. This is LPS-assembly protein LptD from Pseudomonas syringae pv. syringae (strain B728a).